We begin with the raw amino-acid sequence, 202 residues long: Transcription factor IBH1 (202 aa).

Residues Met1 to Asn16 are compositionally biased toward pro residues. Residues Met1–Arg33 are disordered. Residues Thr136–Leu185 form the bHLH domain.

The protein belongs to the bHLH protein family. As to quaternary structure, interacts with ILI1. Binds to ILI5/BUL1 and BC1. Interacts with BCL1 and BCL2. In terms of tissue distribution, highly expressed in roots and at lower levels in leaf blades, leaf sheaths, lamina joint, stems and panicles.

Its function is as follows. Atypical and probable non DNA-binding bHLH transcription factor that acts as a negative regulator of cell elongation and plant development. Binds the transcription factor ILI1 and forms a heterodimer of antagonistic bHLH transcription factors that function downstream of BZR1 to mediate brassinosteroid regulation of cell elongation and lamina inclination. In Oryza sativa subsp. japonica (Rice), this protein is Transcription factor IBH1.